A 143-amino-acid chain; its full sequence is Large ribosomal subunit protein uL11 (143 aa).

This sequence belongs to the universal ribosomal protein uL11 family. In terms of assembly, part of the ribosomal stalk of the 50S ribosomal subunit. Interacts with L10 and the large rRNA to form the base of the stalk. L10 forms an elongated spine to which L12 dimers bind in a sequential fashion forming a multimeric L10(L12)X complex. Post-translationally, one or more lysine residues are methylated.

Functionally, forms part of the ribosomal stalk which helps the ribosome interact with GTP-bound translation factors. This Chromobacterium violaceum (strain ATCC 12472 / DSM 30191 / JCM 1249 / CCUG 213 / NBRC 12614 / NCIMB 9131 / NCTC 9757 / MK) protein is Large ribosomal subunit protein uL11.